The sequence spans 369 residues: Tryptophan 2,3-dioxygenase 2 (369 aa).

Substrate is bound by residues 36-40 (FIVVH) and Arg-107. Residue His-303 participates in heme binding. Thr-317 provides a ligand contact to substrate.

It belongs to the tryptophan 2,3-dioxygenase family. Homotetramer. Requires heme as cofactor.

The catalysed reaction is L-tryptophan + O2 = N-formyl-L-kynurenine. It participates in amino-acid degradation; L-tryptophan degradation via kynurenine pathway; L-kynurenine from L-tryptophan: step 1/2. Functionally, heme-dependent dioxygenase that catalyzes the oxidative cleavage of the L-tryptophan (L-Trp) pyrrole ring and converts L-tryptophan to N-formyl-L-kynurenine. Catalyzes the oxidative cleavage of the indole moiety. This is Tryptophan 2,3-dioxygenase 2 from Ralstonia nicotianae (strain ATCC BAA-1114 / GMI1000) (Ralstonia solanacearum).